A 576-amino-acid chain; its full sequence is Proline--tRNA ligase (576 aa).

Belongs to the class-II aminoacyl-tRNA synthetase family. ProS type 1 subfamily. In terms of assembly, homodimer.

The protein localises to the cytoplasm. It catalyses the reaction tRNA(Pro) + L-proline + ATP = L-prolyl-tRNA(Pro) + AMP + diphosphate. Its function is as follows. Catalyzes the attachment of proline to tRNA(Pro) in a two-step reaction: proline is first activated by ATP to form Pro-AMP and then transferred to the acceptor end of tRNA(Pro). As ProRS can inadvertently accommodate and process non-cognate amino acids such as alanine and cysteine, to avoid such errors it has two additional distinct editing activities against alanine. One activity is designated as 'pretransfer' editing and involves the tRNA(Pro)-independent hydrolysis of activated Ala-AMP. The other activity is designated 'posttransfer' editing and involves deacylation of mischarged Ala-tRNA(Pro). The misacylated Cys-tRNA(Pro) is not edited by ProRS. The protein is Proline--tRNA ligase of Trichlorobacter lovleyi (strain ATCC BAA-1151 / DSM 17278 / SZ) (Geobacter lovleyi).